Reading from the N-terminus, the 451-residue chain is Cyclin-dependent kinase 18 (451 aa).

The interval 39-61 (RNEDGRDEPGQLSPGVQYQQRQN) is disordered. Phosphoserine is present on Ser-51. The segment covering 52–61 (PGVQYQQRQN) has biased composition (polar residues). Residues Ser-66 and Ser-109 each carry the phosphoserine modification. The Protein kinase domain maps to 121–402 (YVKLDKLGEG…AEAALSHPYF (282 aa)). ATP contacts are provided by residues 127–135 (LGEGTYATV) and Lys-150. Asp-242 functions as the Proton acceptor in the catalytic mechanism. 2 positions are modified to phosphoserine: Ser-417 and Ser-420.

Belongs to the protein kinase superfamily. CMGC Ser/Thr protein kinase family. CDC2/CDKX subfamily. In terms of tissue distribution, in brain, kidney, intestine and at a much lower level, in fetal tissues.

It catalyses the reaction L-seryl-[protein] + ATP = O-phospho-L-seryl-[protein] + ADP + H(+). The catalysed reaction is L-threonyl-[protein] + ATP = O-phospho-L-threonyl-[protein] + ADP + H(+). May play a role in signal transduction cascades in terminally differentiated cells. In Rattus norvegicus (Rat), this protein is Cyclin-dependent kinase 18 (Cdk18).